The sequence spans 158 residues: NAD(P)H-quinone oxidoreductase subunit N (158 aa).

This sequence belongs to the complex I NdhN subunit family. As to quaternary structure, NDH-1 can be composed of about 15 different subunits; different subcomplexes with different compositions have been identified which probably have different functions.

Its subcellular location is the cellular thylakoid membrane. It catalyses the reaction a plastoquinone + NADH + (n+1) H(+)(in) = a plastoquinol + NAD(+) + n H(+)(out). It carries out the reaction a plastoquinone + NADPH + (n+1) H(+)(in) = a plastoquinol + NADP(+) + n H(+)(out). In terms of biological role, NDH-1 shuttles electrons from an unknown electron donor, via FMN and iron-sulfur (Fe-S) centers, to quinones in the respiratory and/or the photosynthetic chain. The immediate electron acceptor for the enzyme in this species is believed to be plastoquinone. Couples the redox reaction to proton translocation, and thus conserves the redox energy in a proton gradient. Cyanobacterial NDH-1 also plays a role in inorganic carbon-concentration. This Gloeothece citriformis (strain PCC 7424) (Cyanothece sp. (strain PCC 7424)) protein is NAD(P)H-quinone oxidoreductase subunit N.